Reading from the N-terminus, the 245-residue chain is Geranylgeranylglyceryl phosphate synthase (245 aa).

Positions 22 and 51 each coordinate Mg(2+). Sn-glycerol 1-phosphate-binding positions include 169–175, 200–201, and 222–223; these read YLEAGSG, GG, and GT.

Belongs to the GGGP/HepGP synthase family. Group II subfamily. In terms of assembly, homotetramer. Homohexamer. Mg(2+) is required as a cofactor.

Its subcellular location is the cytoplasm. The catalysed reaction is sn-glycerol 1-phosphate + (2E,6E,10E)-geranylgeranyl diphosphate = sn-3-O-(geranylgeranyl)glycerol 1-phosphate + diphosphate. It participates in membrane lipid metabolism; glycerophospholipid metabolism. In terms of biological role, prenyltransferase that catalyzes the transfer of the geranylgeranyl moiety of geranylgeranyl diphosphate (GGPP) to the C3 hydroxyl of sn-glycerol-1-phosphate (G1P). This reaction is the first ether-bond-formation step in the biosynthesis of archaeal membrane lipids. The protein is Geranylgeranylglyceryl phosphate synthase of Methanothermobacter thermautotrophicus (strain ATCC 29096 / DSM 1053 / JCM 10044 / NBRC 100330 / Delta H) (Methanobacterium thermoautotrophicum).